Consider the following 117-residue polypeptide: Ig heavy chain V region 186-1 (117 aa).

Residues 1–19 (MGWSCIMLFLAATATGVHS) form the signal peptide. A framework-1 region spans residues 20–49 (QVQLQQPGAELVKPGASVKLSCKASGYTFT). Cysteines 41 and 115 form a disulfide. Positions 50–54 (SYWMH) are complementarity-determining-1. Positions 55–68 (WVKQRPGRGLEWIG) are framework-2. The complementarity-determining-2 stretch occupies residues 69–85 (RIDPNSGGTKYNEKFKS). Residues 86 to 117 (KATLTVDTSSSTAYMQLHSLTSEDSAVYYCAR) form a framework-3 region.

The sequence is that of Ig heavy chain V region 186-1 from Mus musculus (Mouse).